We begin with the raw amino-acid sequence, 95 residues long: Small ribosomal subunit protein bS6 (95 aa).

Belongs to the bacterial ribosomal protein bS6 family.

Binds together with bS18 to 16S ribosomal RNA. The sequence is that of Small ribosomal subunit protein bS6 from Acholeplasma laidlawii (strain PG-8A).